Consider the following 498-residue polypeptide: WD repeat-containing protein 55 homolog (498 aa).

The tract at residues 1–131 (MHTHNNFKTP…ATFDLDEDDE (131 aa)) is disordered. 2 stretches are compositionally biased toward acidic residues: residues 12–23 (DEDELDDLDEDM) and 31–48 (IEQE…EYDL). Composition is skewed to low complexity over residues 67–82 (NDSS…NAAD) and 93–103 (AGGVTAGGATS). 6 WD repeats span residues 154–193 (KLED…NKLL), 198–237 (VHSK…LKKL), 241–279 (AHDD…AIFE), 282–321 (ELED…MYVQ), 324–363 (PYEE…YHCD), and 408–447 (QHNM…DFGD). Positions 478–498 (DLTKENADGDDDPGAGPSNMA) are disordered.

The protein belongs to the WD repeat WDR55 family.

The polypeptide is WD repeat-containing protein 55 homolog (Drosophila melanogaster (Fruit fly)).